Reading from the N-terminus, the 205-residue chain is Large ribosomal subunit protein uL3 (205 aa).

The protein belongs to the universal ribosomal protein uL3 family. Part of the 50S ribosomal subunit. Forms a cluster with proteins L14 and L19.

Functionally, one of the primary rRNA binding proteins, it binds directly near the 3'-end of the 23S rRNA, where it nucleates assembly of the 50S subunit. The protein is Large ribosomal subunit protein uL3 of Bacteroides thetaiotaomicron (strain ATCC 29148 / DSM 2079 / JCM 5827 / CCUG 10774 / NCTC 10582 / VPI-5482 / E50).